We begin with the raw amino-acid sequence, 567 residues long: Wee1-like protein kinase 2 (567 aa).

Composition is skewed to basic and acidic residues over residues 1–12 and 26–36; these read MDDSSINKELKQ and EGQKEAPESRE. Disordered regions lie at residues 1–103 and 170–191; these read MDDS…DSRS and RSNG…EGKV. S77 carries the phosphoserine modification. The short motif at 174–176 is the Nuclear localization signal element; the sequence is KRK. Residues 215-494 form the Protein kinase domain; sequence FLEVEKIGVG…ARSRVLRPSL (280 aa). Residues 221–229 and K244 contribute to the ATP site; that span reads IGVGEFGTV. The Nuclear export signal motif lies at 318–332; that stretch reads KLKDILLQISLGLKY. Residue D342 is the Proton acceptor of the active site. 2 residues coordinate Mg(2+): N347 and D384. The stretch at 497–523 forms a coiled coil; sequence AEELQQQLNLEKSKTATLERELREAQQ. The tract at residues 502–567 is disordered; the sequence is QQLNLEKSKT…SSFTCGKSSP (66 aa). Basic and acidic residues predominate over residues 507-520; it reads EKSKTATLERELRE. The segment covering 555-567 has biased composition (polar residues); that stretch reads AKSSSFTCGKSSP.

It belongs to the protein kinase superfamily. Ser/Thr protein kinase family. WEE1 subfamily. Post-translationally, phosphorylation leads to increase its activity.

Its subcellular location is the nucleus. It catalyses the reaction L-tyrosyl-[protein] + ATP = O-phospho-L-tyrosyl-[protein] + ADP + H(+). Functionally, oocyte-specific protein tyrosine kinase that phosphorylates and inhibits CDK1 and acts as a key regulator of meiosis during both prophase I and metaphase II. Required to maintain meiotic arrest in oocytes during the germinal vesicle (GV) stage, a long period of quiescence at dictyate prophase I, by phosphorylating CDK1 at 'Tyr-15', leading to inhibit CDK1 activity and prevent meiotic reentry. Also required for metaphase II exit during egg activation by phosphorylating CDK1 at 'Tyr-15', to ensure exit from meiosis in oocytes and promote pronuclear formation. The polypeptide is Wee1-like protein kinase 2 (WEE2) (Canis lupus familiaris (Dog)).